Reading from the N-terminus, the 407-residue chain is Protein COS9 (407 aa).

3 helical membrane-spanning segments follow: residues threonine 75–isoleucine 95, isoleucine 98–isoleucine 118, and isoleucine 261–tryptophan 281.

Belongs to the DUP/COS family.

The protein resides in the membrane. The polypeptide is Protein COS9 (COS9) (Saccharomyces cerevisiae (strain ATCC 204508 / S288c) (Baker's yeast)).